A 293-amino-acid polypeptide reads, in one-letter code: Small ribosomal subunit biogenesis GTPase RsgA (293 aa).

One can recognise a CP-type G domain in the interval 63 to 223 (KNELVRPPIA…VADTPGFSSL (161 aa)). GTP is bound by residues 112–115 (SKMD) and 166–174 (GQSGVGKSS). Residues Cys-247, Cys-252, His-254, and Cys-260 each coordinate Zn(2+).

This sequence belongs to the TRAFAC class YlqF/YawG GTPase family. RsgA subfamily. Monomer. Associates with 30S ribosomal subunit, binds 16S rRNA. Zn(2+) serves as cofactor.

Its subcellular location is the cytoplasm. One of several proteins that assist in the late maturation steps of the functional core of the 30S ribosomal subunit. Helps release RbfA from mature subunits. May play a role in the assembly of ribosomal proteins into the subunit. Circularly permuted GTPase that catalyzes slow GTP hydrolysis, GTPase activity is stimulated by the 30S ribosomal subunit. In Bacillus cereus (strain ATCC 10987 / NRS 248), this protein is Small ribosomal subunit biogenesis GTPase RsgA.